A 431-amino-acid polypeptide reads, in one-letter code: Nuclear receptor subfamily 1 group I member 2 (431 aa).

A DNA-binding region (nuclear receptor) is located at residues 35-104 (LQICRVCGDK…RLRKCLESGM (70 aa)). 2 NR C4-type zinc fingers span residues 38–58 (CRVC…CEGC) and 74–99 (CPFR…LRKC). The Bipartite nuclear localization signal signature appears at 63 to 89 (RRAMKRNVRLRCPFRKGTCEITRKTRR). Positions 105 to 142 (KKEMIMSDAAVEQRRALIKRKKREKIEAPPPGGQGLTE) are hinge. The region spanning 143 to 430 (EQQALIQELM…LMQELFSSTD (288 aa)) is the NR LBD domain. Hyperforin-binding positions include Ser-244 and 282–285 (ILRF).

The protein belongs to the nuclear hormone receptor family. NR1 subfamily. As to quaternary structure, heterodimer with RXRA. Interacts with NCOA1. Interacts (via domain NR LBD) with CRY1 and CRY2 in a ligand-dependent manner.

The protein localises to the nucleus. In terms of biological role, nuclear receptor that binds and is activated by a variety of endogenous and xenobiotic compounds. Transcription factor that activates the transcription of multiple genes involved in the metabolism and secretion of potentially harmful xenobiotics, endogenous compounds and drugs. Response to specific ligands is species-specific, due to differences in the ligand-binding domain. Binds to a response element in the promoters of the CYP3A4 and ABCB1/MDR1 genes. Activated by naturally occurring steroids such as pregnenolone and progesterone, the cholesterol metabolite 5-beta-cholestane-3-alpha,7-alpha,12-alpha-triol, synthetic glucocorticoids and antiglucocorticoids and 16-alpha-carbonitrile (PCN). This chain is Nuclear receptor subfamily 1 group I member 2 (Nr1i2), found in Mus musculus (Mouse).